The following is a 704-amino-acid chain: G-protein coupled receptor-associated protein LMBRD2B (704 aa).

The Extracellular portion of the chain corresponds to 1–3 (MSG). Residues 4-21 (AALGIEIVVVFFLALFLL) traverse the membrane as a helical segment. Topologically, residues 22 to 33 (HRYGDFKKQQRM) are cytoplasmic. A helical membrane pass occupies residues 34 to 54 (VLFGTLLAWYLCFLIVFILPL). The Extracellular portion of the chain corresponds to 55–111 (DVSTTIYNQCLIDQEAQTQTPSVSPVLSEQTTANASISPAKSTQRVCYKPWSYIPDG). N-linked (GlcNAc...) asparagine glycosylation occurs at Asn88. A helical membrane pass occupies residues 112 to 132 (IMPVFWRVVYWTSQCLTWLLL). The Cytoplasmic portion of the chain corresponds to 133–157 (PFMQSYARSGGFTITGKIKTALIEN). A helical transmembrane segment spans residues 158–178 (AIYYGTYLFIFGSLLIYVAVH). At 179 to 192 (PQWHLSWYELQTIG) the chain is on the extracellular side. Residues 193–213 (ITAANTWGLFLLVLLLGYGLV) form a helical membrane-spanning segment. The Cytoplasmic segment spans residues 214–393 (DIPRSYWEAS…ECLLKQWFYR (180 aa)). The stretch at 235–266 (KAAKLMTEKADSEENLEDVMEEVRKINESIKY) forms a coiled coil. A helical transmembrane segment spans residues 394-414 (VLAVVLALFSVAVVWSECTFF). Residues 415–438 (STHPVLSLFAVFIQLAERDYNYLY) are Extracellular-facing. Residues 439–459 (IEMACFITIFFLCTCVYSTVF) form a helical membrane-spanning segment. The Cytoplasmic segment spans residues 460–481 (RIRVFNYYYLASHHQTDAYSLQ). A helical membrane pass occupies residues 482-502 (FSGMLFCRLTPPLCLNFLGLI). Topologically, residues 503–527 (HMDSAISHQAKKQTAYTSIMGSMRV) are extracellular. A helical transmembrane segment spans residues 528-548 (LSFIANGFYIYYPMLIVVLCI). At 549–704 (ATYFSLGTRC…SSRNRIFDDV (156 aa)) the chain is on the cytoplasmic side. Residues 576–612 (DLIDEGRELLRRERRKRQRIEDGENRRREWRERYAQR) adopt a coiled-coil conformation. 2 disordered regions span residues 613–654 (DENA…QSGR) and 672–704 (TLTDDPLQSDTGRHAGGRYLSMSSSRNRIFDDV). The span at 631 to 654 (YGETLNANTNRQAKYTRSGSQSGR) shows a compositional bias: polar residues.

Belongs to the LIMR family.

Its subcellular location is the cell membrane. Its function is as follows. May associate with G-protein coupled receptors and regulate downstream signaling pathways. The sequence is that of G-protein coupled receptor-associated protein LMBRD2B (lmbrd2b) from Danio rerio (Zebrafish).